We begin with the raw amino-acid sequence, 1343 residues long: DNA-directed RNA polymerase subunit beta (1343 aa).

The protein belongs to the RNA polymerase beta chain family. The RNAP catalytic core consists of 2 alpha, 1 beta, 1 beta' and 1 omega subunit. When a sigma factor is associated with the core the holoenzyme is formed, which can initiate transcription.

It carries out the reaction RNA(n) + a ribonucleoside 5'-triphosphate = RNA(n+1) + diphosphate. DNA-dependent RNA polymerase catalyzes the transcription of DNA into RNA using the four ribonucleoside triphosphates as substrates. The protein is DNA-directed RNA polymerase subunit beta of Shewanella denitrificans (strain OS217 / ATCC BAA-1090 / DSM 15013).